A 171-amino-acid polypeptide reads, in one-letter code: Neudesin (171 aa).

The first 30 residues, 1 to 30 (MARPAPWWWLRPLAALALALALVRVPSARA), serve as a signal peptide directing secretion. Residues 43–128 (VRLFTEEELA…KELEALDDIF (86 aa)) enclose the Cytochrome b5 heme-binding domain. Residue Lys-135 is modified to N6-acetyllysine. A disordered region spans residues 151–171 (GSPNLDFKPEDQPHFDIKDEF). Residues 157–171 (FKPEDQPHFDIKDEF) are compositionally biased toward basic and acidic residues.

This sequence belongs to the cytochrome b5 family. MAPR subfamily. Interacts with PINK1 and PARK7.

Its subcellular location is the secreted. The protein localises to the extracellular space. The protein resides in the mitochondrion. It is found in the endoplasmic reticulum. In terms of biological role, acts as a neurotrophic factor in postnatal mature neurons enhancing neuronal survival. Promotes cell proliferation and neurogenesis in undifferentiated neural progenitor cells at the embryonic stage and inhibits differentiation of astrocytes. Its neurotrophic activity is exerted via MAPK1/ERK2, MAPK3/ERK1 and AKT1/AKT pathways. Neurotrophic activity is enhanced by binding to heme. Also acts as an anorexigenic neurotrophic factor that contributes to energy balance. The polypeptide is Neudesin (Rattus norvegicus (Rat)).